A 235-amino-acid polypeptide reads, in one-letter code: Proteasome subunit beta type-1 (235 aa).

Residues 1-20 (MSRLGFEQFPDYQVPGMKHP) constitute a propeptide that is removed on maturation.

The protein belongs to the peptidase T1B family. As to quaternary structure, the 26S proteasome consists of a 20S proteasome core and two 19S regulatory subunits. The 20S proteasome core is composed of 28 subunits that are arranged in four stacked rings, resulting in a barrel-shaped structure. The two end rings are each formed by seven alpha subunits, and the two central rings are each formed by seven beta subunits. The catalytic chamber with the active sites is on the inside of the barrel.

It is found in the cytoplasm. It localises to the nucleus. Non-catalytic component of the proteasome, a multicatalytic proteinase complex which is characterized by its ability to cleave peptides with Arg, Phe, Tyr, Leu, and Glu adjacent to the leaving group at neutral or slightly basic pH. The proteasome has an ATP-dependent proteolytic activity. The polypeptide is Proteasome subunit beta type-1 (Prosbeta6) (Drosophila melanogaster (Fruit fly)).